Here is a 118-residue protein sequence, read N- to C-terminus: Large ribosomal subunit protein uL24 (118 aa).

This sequence belongs to the universal ribosomal protein uL24 family. As to quaternary structure, part of the 50S ribosomal subunit.

Its function is as follows. One of two assembly initiator proteins, it binds directly to the 5'-end of the 23S rRNA, where it nucleates assembly of the 50S subunit. In terms of biological role, one of the proteins that surrounds the polypeptide exit tunnel on the outside of the subunit. The sequence is that of Large ribosomal subunit protein uL24 from Prochlorococcus marinus (strain NATL1A).